Here is a 31-residue protein sequence, read N- to C-terminus: Chassatide C5 (31 aa).

A cross-link (cyclopeptide (Gly-Asn)) is located at residues 1–31; that stretch reads GVIPCGESCVFIPCISSVVGCSCKNKVCYRN. Intrachain disulfides connect cysteine 5–cysteine 21, cysteine 9–cysteine 23, and cysteine 14–cysteine 28.

Post-translationally, this is a cyclic peptide. Expressed in pedicel, root and stem but not in leaf and fruit (at protein level).

Probably participates in a plant defense mechanism. In Chassalia chartacea (Chassalia curviflora), this protein is Chassatide C5.